We begin with the raw amino-acid sequence, 336 residues long: Formimidoylglutamase (336 aa).

Mn(2+) is bound by residues His-129, Asp-160, His-162, Asp-164, Asp-257, and Asp-259.

Belongs to the arginase family. Mn(2+) is required as a cofactor.

It carries out the reaction N-formimidoyl-L-glutamate + H2O = formamide + L-glutamate. The protein operates within amino-acid degradation; L-histidine degradation into L-glutamate; L-glutamate from N-formimidoyl-L-glutamate (hydrolase route): step 1/1. Catalyzes the conversion of N-formimidoyl-L-glutamate to L-glutamate and formamide. This Vibrio vulnificus (strain YJ016) protein is Formimidoylglutamase.